A 456-amino-acid polypeptide reads, in one-letter code: Enolase (456 aa).

(2R)-2-phosphoglycerate is bound at residue Q164. The Proton donor role is filled by E207. Residues D244, E287, and D314 each coordinate Mg(2+). Residues K339, R368, S369, and K390 each contribute to the (2R)-2-phosphoglycerate site. K339 acts as the Proton acceptor in catalysis.

The protein belongs to the enolase family. Component of the RNA degradosome, a multiprotein complex involved in RNA processing and mRNA degradation. It depends on Mg(2+) as a cofactor.

Its subcellular location is the cytoplasm. It is found in the secreted. The protein localises to the cell surface. It catalyses the reaction (2R)-2-phosphoglycerate = phosphoenolpyruvate + H2O. It functions in the pathway carbohydrate degradation; glycolysis; pyruvate from D-glyceraldehyde 3-phosphate: step 4/5. Its function is as follows. Catalyzes the reversible conversion of 2-phosphoglycerate (2-PG) into phosphoenolpyruvate (PEP). It is essential for the degradation of carbohydrates via glycolysis. The sequence is that of Enolase from Francisella tularensis subsp. tularensis (strain FSC 198).